The primary structure comprises 477 residues: Stromelysin-1 (477 aa).

A signal peptide spans 1 to 17 (MKSLPILLLLCVAVCSA). Residues 18–99 (YPLDGAARGE…PRCGVPDVGH (82 aa)) constitute a propeptide, activation peptide. The Cysteine switch motif lies at 90–97 (PRCGVPDV). Cys-92 contributes to the Zn(2+) binding site. Residues Asp-124 and Asp-158 each contribute to the Ca(2+) site. Residues His-168 and Asp-170 each contribute to the Zn(2+) site. Ca(2+) contacts are provided by Asp-175, Gly-176, Gly-178, and Val-180. Residue His-183 coordinates Zn(2+). The Ca(2+) site is built by Gly-190, Asn-192, and Asp-194. His-196 is a binding site for Zn(2+). Residues Asp-198, Asp-199, and Glu-201 each coordinate Ca(2+). His-218 provides a ligand contact to Zn(2+). Glu-219 is a catalytic residue. The Zn(2+) site is built by His-222 and His-228. A disordered region spans residues 262 to 287 (LYGPPPDSPETPLVPTEPVPPEPGTP). A compositionally biased stretch (pro residues) spans 276 to 285 (PTEPVPPEPG). Hemopexin repeat units follow at residues 287–336 (PANC…WPSL), 337–383 (PSGV…GFPP), 385–433 (VRKI…FPGI), and 434–477 (DSKI…WLNC). Cys-290 and Cys-477 form a disulfide bridge. Position 297 (Asp-297) interacts with Ca(2+). Positions 389 and 438 each coordinate Ca(2+).

The protein belongs to the peptidase M10A family. The cofactor is Ca(2+). Zn(2+) serves as cofactor. Directly cleaved by HTRA2 to produce active form.

Its subcellular location is the secreted. The protein resides in the extracellular space. It localises to the extracellular matrix. The protein localises to the nucleus. It is found in the cytoplasm. It catalyses the reaction Preferential cleavage where P1', P2' and P3' are hydrophobic residues.. Its activity is regulated as follows. Enzymatic activity is activated by HTRA2 in dopaminergic cells upon mitochondrial stress. In terms of biological role, metalloproteinase with a rather broad substrate specificity that can degrade fibronectin, laminin, gelatins of type I, III, IV, and V; collagens III, IV, X, and IX, and cartilage proteoglycans. Activates different molecules including growth factors, plasminogen or other matrix metalloproteinases such as MMP9. Once released into the extracellular matrix (ECM), the inactive pro-enzyme is activated by the plasmin cascade signaling pathway. Also acts intracellularly. For example, in dopaminergic neurons, gets activated by the serine protease HTRA2 upon stress and plays a pivotal role in DA neuronal degeneration by mediating microglial activation and alpha-synuclein/SNCA cleavage. In addition, plays a role in immune response and possesses antiviral activity against various viruses such as vesicular stomatitis virus, influenza A virus (H1N1) and human herpes virus 1. Mechanistically, translocates from the cytoplasm into the cell nucleus upon virus infection to influence NF-kappa-B activities. This chain is Stromelysin-1 (MMP3), found in Homo sapiens (Human).